We begin with the raw amino-acid sequence, 912 residues long: E3 ubiquitin-protein ligase HACE1 (912 aa).

ANK repeat units lie at residues 23 to 55 (LPED…NSKF), 64 to 93 (VKRS…DPNY), 97 to 126 (SGCT…DVNI), 130 to 159 (EGLT…NVDV), 163 to 192 (MGQT…DINR), 196 to 226 (SGAT…YLPD), and 228 to 253 (NGVT…QHHP). Positions 577 to 912 (NCEKLKQGIA…HCGSYGYTMA (336 aa)) constitute an HECT domain. Residue C879 is the Glycyl thioester intermediate of the active site.

It localises to the golgi apparatus. The protein localises to the golgi stack membrane. The protein resides in the cytoplasm. It is found in the endoplasmic reticulum. It catalyses the reaction S-ubiquitinyl-[E2 ubiquitin-conjugating enzyme]-L-cysteine + [acceptor protein]-L-lysine = [E2 ubiquitin-conjugating enzyme]-L-cysteine + N(6)-ubiquitinyl-[acceptor protein]-L-lysine.. The protein operates within protein modification; protein ubiquitination. Its function is as follows. E3 ubiquitin-protein ligase involved in Golgi membrane fusion and regulation of small GTPases. Acts as a regulator of Golgi membrane dynamics during the cell cycle: recruited to Golgi membrane by Rab proteins and regulates postmitotic Golgi membrane fusion. Acts by mediating ubiquitination during mitotic Golgi disassembly, ubiquitination serving as a signal for Golgi reassembly later, after cell division. This Xenopus tropicalis (Western clawed frog) protein is E3 ubiquitin-protein ligase HACE1 (hace1).